A 362-amino-acid chain; its full sequence is HMG box-containing protein C19G7.04 (362 aa).

In terms of domain architecture, SprT-like spans 135–299 (KCFLARLEDE…RLCKSQIKQI (165 aa)). The HMG box DNA-binding region spans 306 to 348 (PNAFQIFLKENSKRLRKLHPHITHKELMKKLSDEYHRTKDAKQ).

Its subcellular location is the nucleus. It is found in the cytoplasm. It localises to the cytoskeleton. The protein localises to the spindle. This Schizosaccharomyces pombe (strain 972 / ATCC 24843) (Fission yeast) protein is HMG box-containing protein C19G7.04.